A 427-amino-acid polypeptide reads, in one-letter code: Glutamate-1-semialdehyde 2,1-aminomutase (427 aa).

Lys265 carries the post-translational modification N6-(pyridoxal phosphate)lysine.

The protein belongs to the class-III pyridoxal-phosphate-dependent aminotransferase family. HemL subfamily. In terms of assembly, homodimer. It depends on pyridoxal 5'-phosphate as a cofactor.

Its subcellular location is the cytoplasm. The enzyme catalyses (S)-4-amino-5-oxopentanoate = 5-aminolevulinate. It functions in the pathway porphyrin-containing compound metabolism; protoporphyrin-IX biosynthesis; 5-aminolevulinate from L-glutamyl-tRNA(Glu): step 2/2. In Edwardsiella ictaluri (strain 93-146), this protein is Glutamate-1-semialdehyde 2,1-aminomutase.